The primary structure comprises 437 residues: Trigger factor (437 aa).

The PPIase FKBP-type domain maps to 165-251 (GDLVVIDFKG…LHTIKEKEKI (87 aa)).

Belongs to the FKBP-type PPIase family. Tig subfamily.

Its subcellular location is the cytoplasm. The enzyme catalyses [protein]-peptidylproline (omega=180) = [protein]-peptidylproline (omega=0). Functionally, involved in protein export. Acts as a chaperone by maintaining the newly synthesized protein in an open conformation. Functions as a peptidyl-prolyl cis-trans isomerase. The chain is Trigger factor from Nitratiruptor sp. (strain SB155-2).